The following is a 633-amino-acid chain: Chaperone protein HtpG (633 aa).

Residues Met-1 to Arg-341 form an a; substrate-binding region. The tract at residues Glu-342–Arg-562 is b. The segment at Leu-563–Ala-633 is c.

It belongs to the heat shock protein 90 family. As to quaternary structure, homodimer.

The protein localises to the cytoplasm. Functionally, molecular chaperone. Has ATPase activity. The sequence is that of Chaperone protein HtpG from Cupriavidus metallidurans (strain ATCC 43123 / DSM 2839 / NBRC 102507 / CH34) (Ralstonia metallidurans).